The following is a 374-amino-acid chain: 2,7-anhydro-N-acetylneuraminate hydratase (374 aa).

NAD(+) contacts are provided by Tyr13, Phe14, Asp35, Asn38, Thr70, Asn72, His75, Glu92, Lys93, Trp162, and Lys163.

It belongs to the Gfo/Idh/MocA family. Homodimer. Requires NAD(+) as cofactor.

The enzyme catalyses N-acetyl-2,7-anhydro-alpha-neuraminate + H2O = N-acetyl-alpha-neuraminate. Its activity is regulated as follows. Neu5Ac is produced in the presence of NAD(+) or NADH, but not in the presence of FAD. Its function is as follows. Hydratase involved in the degradation of sialic acids, which are present in the host mucus layer and represent a much-coveted source of nutrients for R.gnavus, a prevalent member of the normal gut microbiota. Catalyzes the reversible conversion of the dehydrated form of N-acetylneuraminate (Neu5Ac), 2,7-anhydro-N-acetylneuraminate (2,7-AN), to Neu5Ac, allowing growth on 2,7-AN produced by the IT-sialidase NanH. Acts through a multistep mechanism involving a keto intermediate and cycling of NADH/NAD(+). This is 2,7-anhydro-N-acetylneuraminate hydratase from Mediterraneibacter gnavus (strain ATCC 29149 / DSM 114966 / JCM 6515 / VPI C7-9) (Ruminococcus gnavus).